Consider the following 236-residue polypeptide: Phosphoribosylaminoimidazole-succinocarboxamide synthase (236 aa).

The protein belongs to the SAICAR synthetase family.

The catalysed reaction is 5-amino-1-(5-phospho-D-ribosyl)imidazole-4-carboxylate + L-aspartate + ATP = (2S)-2-[5-amino-1-(5-phospho-beta-D-ribosyl)imidazole-4-carboxamido]succinate + ADP + phosphate + 2 H(+). It functions in the pathway purine metabolism; IMP biosynthesis via de novo pathway; 5-amino-1-(5-phospho-D-ribosyl)imidazole-4-carboxamide from 5-amino-1-(5-phospho-D-ribosyl)imidazole-4-carboxylate: step 1/2. The chain is Phosphoribosylaminoimidazole-succinocarboxamide synthase from Pseudomonas entomophila (strain L48).